A 422-amino-acid chain; its full sequence is S-adenosylmethionine synthase (422 aa).

His15 is an ATP binding site. Asp17 provides a ligand contact to Mg(2+). Glu43 serves as a coordination point for K(+). 2 residues coordinate L-methionine: Glu56 and Gln99. Residues 99–109 (QSPDISRGVTE) are flexible loop. Residues 166–168 (DGK), 232–233 (RF), Asp241, 247–248 (RK), Ala264, and Lys268 contribute to the ATP site. Residue Asp241 coordinates L-methionine. Lys272 serves as a coordination point for L-methionine. The disordered stretch occupies residues 390–422 (AVPATTNGAGSKNGSGSKKEPKRKGKKETGAQA).

This sequence belongs to the AdoMet synthase family. Homotetramer; dimer of dimers. The cofactor is Mg(2+). K(+) serves as cofactor.

It localises to the cytoplasm. It carries out the reaction L-methionine + ATP + H2O = S-adenosyl-L-methionine + phosphate + diphosphate. Its pathway is amino-acid biosynthesis; S-adenosyl-L-methionine biosynthesis; S-adenosyl-L-methionine from L-methionine: step 1/1. Its function is as follows. Catalyzes the formation of S-adenosylmethionine (AdoMet) from methionine and ATP. The overall synthetic reaction is composed of two sequential steps, AdoMet formation and the subsequent tripolyphosphate hydrolysis which occurs prior to release of AdoMet from the enzyme. This Sorangium cellulosum (strain So ce56) (Polyangium cellulosum (strain So ce56)) protein is S-adenosylmethionine synthase.